A 221-amino-acid polypeptide reads, in one-letter code: Peptide methionine sulfoxide reductase MsrA (221 aa).

Residue Cys-54 is part of the active site.

The protein belongs to the MsrA Met sulfoxide reductase family.

The catalysed reaction is L-methionyl-[protein] + [thioredoxin]-disulfide + H2O = L-methionyl-(S)-S-oxide-[protein] + [thioredoxin]-dithiol. It catalyses the reaction [thioredoxin]-disulfide + L-methionine + H2O = L-methionine (S)-S-oxide + [thioredoxin]-dithiol. Its function is as follows. Has an important function as a repair enzyme for proteins that have been inactivated by oxidation. Catalyzes the reversible oxidation-reduction of methionine sulfoxide in proteins to methionine. The polypeptide is Peptide methionine sulfoxide reductase MsrA (Methylobacterium sp. (strain 4-46)).